The sequence spans 275 residues: Aliphatic sulfonates import ATP-binding protein SsuB 1 (275 aa).

Residues 34-260 (ISLTGLEKSF…RHGHPGLCEL (227 aa)) form the ABC transporter domain. Residue 66–73 (GKSGCGKS) coordinates ATP.

It belongs to the ABC transporter superfamily. Aliphatic sulfonates importer (TC 3.A.1.17.2) family. As to quaternary structure, the complex is composed of two ATP-binding proteins (SsuB), two transmembrane proteins (SsuC) and a solute-binding protein (SsuA).

It localises to the cell inner membrane. It carries out the reaction ATP + H2O + aliphatic sulfonate-[sulfonate-binding protein]Side 1 = ADP + phosphate + aliphatic sulfonateSide 2 + [sulfonate-binding protein]Side 1.. Functionally, part of the ABC transporter complex SsuABC involved in aliphatic sulfonates import. Responsible for energy coupling to the transport system. The protein is Aliphatic sulfonates import ATP-binding protein SsuB 1 of Rhizobium johnstonii (strain DSM 114642 / LMG 32736 / 3841) (Rhizobium leguminosarum bv. viciae).